Consider the following 515-residue polypeptide: 1-pyrroline-5-carboxylate dehydrogenase (515 aa).

Catalysis depends on residues E286 and C320.

It belongs to the aldehyde dehydrogenase family. RocA subfamily.

The catalysed reaction is L-glutamate 5-semialdehyde + NAD(+) + H2O = L-glutamate + NADH + 2 H(+). The protein operates within amino-acid degradation; L-proline degradation into L-glutamate; L-glutamate from L-proline: step 2/2. The protein is 1-pyrroline-5-carboxylate dehydrogenase of Bacillus anthracis (strain A0248).